The chain runs to 156 residues: Ribonuclease pancreatic (156 aa).

An N-terminal signal peptide occupies residues 1 to 28 (MALEKSLALLPLLVLVLLVLGWVQPSLG). Over residues 33-43 (AKKFQRQHMDS) the composition is skewed to basic and acidic residues. The interval 33 to 52 (AKKFQRQHMDSDGSPSSNPT) is disordered. Substrate is bound by residues lysine 35 and arginine 38. The active-site Proton acceptor is histidine 40. 4 disulfide bridges follow: cysteine 54–cysteine 112, cysteine 68–cysteine 123, cysteine 86–cysteine 138, and cysteine 93–cysteine 100. A glycan (N-linked (GlcNAc...) asparagine) is linked at asparagine 62. Residues 69–73 (KPVNT), lysine 94, and arginine 113 contribute to the substrate site. The N-linked (GlcNAc...) asparagine glycan is linked to asparagine 116. Histidine 147 acts as the Proton donor in catalysis.

This sequence belongs to the pancreatic ribonuclease family. As to quaternary structure, monomer. Interacts with and forms tight 1:1 complexes with RNH1. Dimerization of two such complexes may occur. Interaction with RNH1 inhibits this protein.

It localises to the secreted. It catalyses the reaction an [RNA] containing cytidine + H2O = an [RNA]-3'-cytidine-3'-phosphate + a 5'-hydroxy-ribonucleotide-3'-[RNA].. It carries out the reaction an [RNA] containing uridine + H2O = an [RNA]-3'-uridine-3'-phosphate + a 5'-hydroxy-ribonucleotide-3'-[RNA].. Functionally, endonuclease that catalyzes the cleavage of RNA on the 3' side of pyrimidine nucleotides. Acts on single-stranded and double-stranded RNA. The protein is Ribonuclease pancreatic (RNASE1) of Saimiri sciureus (Common squirrel monkey).